Reading from the N-terminus, the 126-residue chain is Large-conductance mechanosensitive channel (126 aa).

The next 2 membrane-spanning stretches (helical) occupy residues 14-34 (VIDL…VKSL) and 67-87 (GSFL…FILV).

The protein belongs to the MscL family. In terms of assembly, homopentamer.

It localises to the cell membrane. In terms of biological role, channel that opens in response to stretch forces in the membrane lipid bilayer. May participate in the regulation of osmotic pressure changes within the cell. This Lactiplantibacillus plantarum (strain ATCC BAA-793 / NCIMB 8826 / WCFS1) (Lactobacillus plantarum) protein is Large-conductance mechanosensitive channel.